A 295-amino-acid chain; its full sequence is Ribosome production factor 1 (295 aa).

The tract at residues 24 to 47 is disordered; the sequence is HEKNKERHTMRRKRAKEERENPEL. The segment covering 38–47 has biased composition (basic and acidic residues); the sequence is AKEERENPEL. One can recognise a Brix domain in the interval 93-276; the sequence is PKIFLTTNVN…LKRLQRGIKE (184 aa). The tract at residues 254-271 is RNA-binding; the sequence is VGLQELGPQFTLKLKRLQ.

In terms of assembly, part of a complex that includes BRX1, RPF1, RPF2 and SSF1 or SSF2.

The protein localises to the nucleus. It is found in the nucleolus. Essential protein. Required for biogenesis of the 60S ribosomal subunit. The protein is Ribosome production factor 1 (RPF1) of Saccharomyces cerevisiae (strain ATCC 204508 / S288c) (Baker's yeast).